The primary structure comprises 138 residues: Translation initiation factor 5A (138 aa).

Lysine 37 is modified (hypusine).

Belongs to the eIF-5A family.

The protein resides in the cytoplasm. Functions by promoting the formation of the first peptide bond. The chain is Translation initiation factor 5A (eIF5A) from Thermococcus sibiricus (strain DSM 12597 / MM 739).